We begin with the raw amino-acid sequence, 396 residues long: Elongation factor Tu (396 aa).

Positions 10–206 (KPHVNVGTIG…VLDTYIPEPE (197 aa)) constitute a tr-type G domain. A G1 region spans residues 19–26 (GHVDHGKT). 19-26 (GHVDHGKT) provides a ligand contact to GTP. T26 is a Mg(2+) binding site. Residues 60–64 (GITIN) form a G2 region. Residues 81 to 84 (DCPG) form a G3 region. GTP contacts are provided by residues 81-85 (DCPGH) and 136-139 (NKCD). A G4 region spans residues 136-139 (NKCD). Residues 174 to 176 (SAT) form a G5 region.

The protein belongs to the TRAFAC class translation factor GTPase superfamily. Classic translation factor GTPase family. EF-Tu/EF-1A subfamily. As to quaternary structure, monomer.

Its subcellular location is the cytoplasm. It catalyses the reaction GTP + H2O = GDP + phosphate + H(+). In terms of biological role, GTP hydrolase that promotes the GTP-dependent binding of aminoacyl-tRNA to the A-site of ribosomes during protein biosynthesis. The sequence is that of Elongation factor Tu from Psychrobacter cryohalolentis (strain ATCC BAA-1226 / DSM 17306 / VKM B-2378 / K5).